Here is a 337-residue protein sequence, read N- to C-terminus: Inositol 2-dehydrogenase (337 aa).

Belongs to the Gfo/Idh/MocA family. Homotetramer.

The catalysed reaction is myo-inositol + NAD(+) = scyllo-inosose + NADH + H(+). Its function is as follows. Involved in the oxidation of myo-inositol (MI) to 2-keto-myo-inositol (2KMI or 2-inosose). The chain is Inositol 2-dehydrogenase from Burkholderia multivorans (strain ATCC 17616 / 249).